Reading from the N-terminus, the 314-residue chain is Acetaldehyde dehydrogenase 2 (314 aa).

15–18 (SGNI) contributes to the NAD(+) binding site. Cys-133 acts as the Acyl-thioester intermediate in catalysis. NAD(+) is bound by residues 164 to 172 (SAGPGTRQN) and Asn-289.

The protein belongs to the acetaldehyde dehydrogenase family.

The catalysed reaction is acetaldehyde + NAD(+) + CoA = acetyl-CoA + NADH + H(+). In Nocardioides sp. (strain ATCC BAA-499 / JS614), this protein is Acetaldehyde dehydrogenase 2.